Reading from the N-terminus, the 712-residue chain is DNA ligase (712 aa).

The interval 1–22 is disordered; it reads MVQKNEHQGGQSQHSLFAAGPT. NAD(+)-binding positions include 53-57 and aspartate 138; that span reads DDQFD. The active-site N6-AMP-lysine intermediate is the lysine 140. Positions 161, 199, 318, and 342 each coordinate NAD(+). Cysteine 436, cysteine 439, cysteine 454, and cysteine 459 together coordinate Zn(2+). The segment at 612–631 is disordered; sequence RGGRSGGGSSGSTGEGGLAS. Positions 614–630 are enriched in gly residues; it reads GRSGGGSSGSTGEGGLA. In terms of domain architecture, BRCT spans 629–712; the sequence is LASGPLAGKN…MLREAKAASE (84 aa).

The protein belongs to the NAD-dependent DNA ligase family. LigA subfamily. Mg(2+) is required as a cofactor. Mn(2+) serves as cofactor.

It carries out the reaction NAD(+) + (deoxyribonucleotide)n-3'-hydroxyl + 5'-phospho-(deoxyribonucleotide)m = (deoxyribonucleotide)n+m + AMP + beta-nicotinamide D-nucleotide.. Its function is as follows. DNA ligase that catalyzes the formation of phosphodiester linkages between 5'-phosphoryl and 3'-hydroxyl groups in double-stranded DNA using NAD as a coenzyme and as the energy source for the reaction. It is essential for DNA replication and repair of damaged DNA. This Desulfovibrio desulfuricans (strain ATCC 27774 / DSM 6949 / MB) protein is DNA ligase.